The chain runs to 59 residues: Mu-conotoxin SrVA (59 aa).

A signal peptide spans 1-22; the sequence is MRCLPVFVILLLLIASAPSVDA. The propeptide occupies 23 to 44; the sequence is QLKTKDDVPLASFHDNAKGTQH. 2 disulfides stabilise this stretch: C51-C58 and C52-C59.

Belongs to the conotoxin T superfamily. As to expression, expressed by the venom duct.

It is found in the secreted. Functionally, mu-conotoxins block voltage-gated sodium channels. This peptide inhibits the cardiac sodium channel hNav1.5/SCN5A (33% inhibition at 200 nM, 50% at 400 nM, and 55% at 600 nM). Does not interfere with the voltage-dependence of activation, but affects the voltage-dependence of inactivation of hNav1.5. In vivo, intracranial injection into 9-day-old mice causes transient symptoms, including extension of the body and clockwise and counter-clockwise turns, that last 3 to 4 minutes. Intracranial injection into 16-day-old mice, causes transient symptoms, including agitated breathing and occasional turning followed by scratching and grooming behavior, that last for 15-19 minutes. The protein is Mu-conotoxin SrVA of Conus spurius (Alphabet cone).